A 324-amino-acid chain; its full sequence is Biotin synthase (324 aa).

In terms of domain architecture, Radical SAM core spans 50-278 (HAGPAFTCAI…QADILVAGGR (229 aa)). [4Fe-4S] cluster contacts are provided by Cys-67, Cys-71, and Cys-74. Cys-143 and Cys-203 together coordinate [2Fe-2S] cluster.

Belongs to the radical SAM superfamily. Biotin synthase family. In terms of assembly, homodimer. It depends on [4Fe-4S] cluster as a cofactor. [2Fe-2S] cluster serves as cofactor.

The enzyme catalyses (4R,5S)-dethiobiotin + (sulfur carrier)-SH + 2 reduced [2Fe-2S]-[ferredoxin] + 2 S-adenosyl-L-methionine = (sulfur carrier)-H + biotin + 2 5'-deoxyadenosine + 2 L-methionine + 2 oxidized [2Fe-2S]-[ferredoxin]. The protein operates within cofactor biosynthesis; biotin biosynthesis; biotin from 7,8-diaminononanoate: step 2/2. Its function is as follows. Catalyzes the conversion of dethiobiotin (DTB) to biotin by the insertion of a sulfur atom into dethiobiotin via a radical-based mechanism. This Oleidesulfovibrio alaskensis (strain ATCC BAA-1058 / DSM 17464 / G20) (Desulfovibrio alaskensis) protein is Biotin synthase.